The sequence spans 150 residues: SsrA-binding protein (150 aa).

Belongs to the SmpB family.

It localises to the cytoplasm. Required for rescue of stalled ribosomes mediated by trans-translation. Binds to transfer-messenger RNA (tmRNA), required for stable association of tmRNA with ribosomes. tmRNA and SmpB together mimic tRNA shape, replacing the anticodon stem-loop with SmpB. tmRNA is encoded by the ssrA gene; the 2 termini fold to resemble tRNA(Ala) and it encodes a 'tag peptide', a short internal open reading frame. During trans-translation Ala-aminoacylated tmRNA acts like a tRNA, entering the A-site of stalled ribosomes, displacing the stalled mRNA. The ribosome then switches to translate the ORF on the tmRNA; the nascent peptide is terminated with the 'tag peptide' encoded by the tmRNA and targeted for degradation. The ribosome is freed to recommence translation, which seems to be the essential function of trans-translation. This Campylobacter curvus (strain 525.92) protein is SsrA-binding protein.